Reading from the N-terminus, the 77-residue chain is Integrin beta-2 (77 aa).

A disulfide bridge links Cys36 with Cys43. Residue Asn54 is glycosylated (N-linked (GlcNAc...) asparagine).

This sequence belongs to the integrin beta chain family. As to quaternary structure, dimer of an alpha and beta subunit.

The protein localises to the membrane. In terms of biological role, integrins are a large family of cell surface glycoproteins that mediate cell to cell and cell to matrix adhesion. The sequence is that of Integrin beta-2 (itgb2) from Xenopus laevis (African clawed frog).